The sequence spans 751 residues: MKKSTVLDARPTGPLPRRPQQPSPVEVRNSSQVEKNNARGSWRKLSPLGRQQEEQGGLIHSQSQSLDTSFAPNTNTTLGSTDVNLNSGVRDRPSPRHSIMHRRETRPLLPSNPTDSGVYASEDCGSSSAGFPRFSSMGNIDKSRDNGQLPDGLCTGGSEVTHSSAVHGEAITDELLRRLTRCSDLKSVSSAQFQLDFGTLRCVESISARMPQLNSLKLNNSRITELRVLGTNYANLRRLWISNCLVSSVSGVGACAPVLEELYASFNSISDIDALTEVSSTLQVVDLEGNDIRDTDMLKRTLPQLKKMKHLVLKGNPVASSETIVELSHSSEEKGTRQRKVSYSKLIGHLMPDLQYLDDAEISNTSLQKSARVQKKHHSAHVDPLEICIRDEYLFVQECIRECGFDALGASGADEMHGSCSRSNVSLISSRSHQLKQNRPSYDRNRPSVAVRSLRKNSQSTASSGDSTNQGCDGGKPRPSCQRWGPTQRTSRLFTGRVTSVGAPKARCRQLPPLKETPASPSTEGLGNEPGNDGQRQQESGAMMQLALKPVPPDANSTRGERKQQNTTSPICGLTAAKGNVYAFDVCDDDDDELEKSKESLMHRVRLGNSATSQQATFMGSGTAKSTNSELADSGLSFLLHRLSTCTHPSGADPPDQRNEQQQEQPTTAGATSRCLDDLETPGDGPLESLNGTPEKDWEWRRELMQSVVDIRKMTSEAALKERVQGSKEVDGGGLEKVESEDEEDVSPVVF.

Residues 1–149 (MKKSTVLDAR…IDKSRDNGQL (149 aa)) are disordered. Residues 13–22 (GPLPRRPQQP) are compositionally biased toward pro residues. Polar residues-rich tracts occupy residues 28–39 (RNSSQVEKNNAR) and 60–87 (HSQSQSLDTSFAPNTNTTLGSTDVNLNS). 5 LRR repeats span residues 210–235 (MPQLNSLKLNNSRITELRVLGTNYAN), 236–256 (LRRLWISNCLVSSVSGVGACA), 258–279 (VLEELYASFNSISDIDALTEVS), 280–304 (STLQVVDLEGNDIRDTDMLKRTLPQ), and 307–328 (KMKHLVLKGNPVASSETIVELS). Disordered regions lie at residues 430–538 (SRSH…QRQQ), 645–698 (TCTH…EKDW), and 717–751 (EAALKERVQGSKEVDGGGLEKVESEDEEDVSPVVF). 2 stretches are compositionally biased toward polar residues: residues 456-471 (KNSQSTASSGDSTNQG) and 662-671 (QQEQPTTAGA). Over residues 717-738 (EAALKERVQGSKEVDGGGLEKV) the composition is skewed to basic and acidic residues. Positions 739-751 (ESEDEEDVSPVVF) are enriched in acidic residues.

It belongs to the LRRC56 family.

Its subcellular location is the cell projection. The protein localises to the cilium. It localises to the flagellum. Its function is as follows. Required for the assembly of dynein arms in the distal portion of flagellum axoneme. In Trypanosoma brucei brucei (strain 927/4 GUTat10.1), this protein is Leucine-rich repeat-containing protein 56 homolog.